A 313-amino-acid chain; its full sequence is Proclavaminate amidinohydrolase (313 aa).

6 residues coordinate Mn(2+): His-121, Asp-144, His-146, Asp-148, Asp-235, and Asp-237.

It belongs to the arginase family. As to quaternary structure, homohexamer. The cofactor is Mn(2+).

It catalyses the reaction amidinoproclavaminate + H2O = proclavaminate + urea. Its pathway is antibiotic biosynthesis; clavulanate biosynthesis; clavulanate from D-glyceraldehyde 3-phosphate and L-arginine: step 4/8. This Streptomyces clavuligerus protein is Proclavaminate amidinohydrolase (pah).